A 354-amino-acid polypeptide reads, in one-letter code: MSKYWSNITKNIEPYVCGEQPKNKKIIKLNTNENPYPPSPKVLQAIKNAARDDLRLYPDPNCDALRKTIANYYNLSKEEVFIGNGSDEILAFSFLTFFNPEETVVFSDISYSFYPVYANLYKLDYKLAKLREDFSIDINDFKNAKGGAVITNPNAPTGVYLSLDSVKQILEDNVNKVVIVDEAYIDFGGESSVSLIKDYPNLLVIQTLSKSRSLAGMRIGFALGQKELIKGLNRIKNSFNSYTIDRISSLAAIESIKDEEYFKECTSKVIKTRNWTINELGKIGFKVIPSKANFIFITYDTYEAKNIFVKLKDENVLVRYFNKYRISNYLRVSIGSKEEMVIFIDKIKEIINKL.

Lysine 210 carries the N6-(pyridoxal phosphate)lysine modification.

The protein belongs to the class-II pyridoxal-phosphate-dependent aminotransferase family. Histidinol-phosphate aminotransferase subfamily. Homodimer. Requires pyridoxal 5'-phosphate as cofactor.

It carries out the reaction L-histidinol phosphate + 2-oxoglutarate = 3-(imidazol-4-yl)-2-oxopropyl phosphate + L-glutamate. It functions in the pathway amino-acid biosynthesis; L-histidine biosynthesis; L-histidine from 5-phospho-alpha-D-ribose 1-diphosphate: step 7/9. The polypeptide is Histidinol-phosphate aminotransferase (Clostridium botulinum (strain 657 / Type Ba4)).